A 94-amino-acid polypeptide reads, in one-letter code: MLTVNEYFEGKVKSIGFSPAGLPATIGVMAIGEYTFGTDCREIMTVVSGELTVKLPEQADWHTYIAGQTFEVEANQSFDLKVAVETAYLCQYDR.

This sequence belongs to the nucleoside phosphorylase PpnP family.

The enzyme catalyses a purine D-ribonucleoside + phosphate = a purine nucleobase + alpha-D-ribose 1-phosphate. It carries out the reaction adenosine + phosphate = alpha-D-ribose 1-phosphate + adenine. It catalyses the reaction cytidine + phosphate = cytosine + alpha-D-ribose 1-phosphate. The catalysed reaction is guanosine + phosphate = alpha-D-ribose 1-phosphate + guanine. The enzyme catalyses inosine + phosphate = alpha-D-ribose 1-phosphate + hypoxanthine. It carries out the reaction thymidine + phosphate = 2-deoxy-alpha-D-ribose 1-phosphate + thymine. It catalyses the reaction uridine + phosphate = alpha-D-ribose 1-phosphate + uracil. The catalysed reaction is xanthosine + phosphate = alpha-D-ribose 1-phosphate + xanthine. Its function is as follows. Catalyzes the phosphorolysis of diverse nucleosides, yielding D-ribose 1-phosphate and the respective free bases. Can use uridine, adenosine, guanosine, cytidine, thymidine, inosine and xanthosine as substrates. Also catalyzes the reverse reactions. This Teredinibacter turnerae (strain ATCC 39867 / T7901) protein is Pyrimidine/purine nucleoside phosphorylase.